A 255-amino-acid chain; its full sequence is 5'-nucleotidase SurE (255 aa).

A divalent metal cation is bound by residues Asp8, Asp9, Ser40, and Asn93.

This sequence belongs to the SurE nucleotidase family. A divalent metal cation serves as cofactor.

It localises to the cytoplasm. The catalysed reaction is a ribonucleoside 5'-phosphate + H2O = a ribonucleoside + phosphate. Functionally, nucleotidase that shows phosphatase activity on nucleoside 5'-monophosphates. This is 5'-nucleotidase SurE from Bradyrhizobium sp. (strain ORS 278).